A 139-amino-acid polypeptide reads, in one-letter code: Putative pre-16S rRNA nuclease (139 aa).

It belongs to the YqgF nuclease family.

The protein resides in the cytoplasm. Could be a nuclease involved in processing of the 5'-end of pre-16S rRNA. The sequence is that of Putative pre-16S rRNA nuclease from Streptococcus thermophilus (strain CNRZ 1066).